Reading from the N-terminus, the 224-residue chain is Transposase for insertion sequence element IS257 in transposon Tn4003 (224 aa).

The H-T-H motif DNA-binding region spans Glu-33–Gln-52. The Integrase catalytic domain maps to Trp-73–Leu-222.

In terms of biological role, involved in the transposition of the insertion sequence. The chain is Transposase for insertion sequence element IS257 in transposon Tn4003 from Staphylococcus aureus.